The sequence spans 166 residues: Cyclin-dependent kinase 4 inhibitor D (166 aa).

M1 bears the N-acetylmethionine mark. ANK repeat units follow at residues 41 to 69 (FGKTALQVMMFGSTAIALELLKQGASPNV), 73 to 102 (SGTSPVHDAARTGFLDTLKVLVEHGADVNV), 106 to 135 (TGALPIHLAVQEGHTAVVSFLAAESDLHRR), and 138 to 166 (RGLTPLELALQRGAQDLVDILQGHMVAPL).

The protein belongs to the CDKN2 cyclin-dependent kinase inhibitor family. In terms of assembly, interacts with CDK6.

The protein resides in the nucleus. It localises to the cytoplasm. In terms of biological role, interacts strongly with CDK4 and CDK6 and inhibits them. The chain is Cyclin-dependent kinase 4 inhibitor D (CDKN2D) from Homo sapiens (Human).